The sequence spans 180 residues: Large ribosomal subunit protein uL6 (180 aa).

This sequence belongs to the universal ribosomal protein uL6 family. Part of the 50S ribosomal subunit.

This protein binds to the 23S rRNA, and is important in its secondary structure. It is located near the subunit interface in the base of the L7/L12 stalk, and near the tRNA binding site of the peptidyltransferase center. The polypeptide is Large ribosomal subunit protein uL6 (Clostridium beijerinckii (strain ATCC 51743 / NCIMB 8052) (Clostridium acetobutylicum)).